The following is a 223-amino-acid chain: Ribosomal RNA small subunit methyltransferase G (223 aa).

Residues Gly83, Leu88, 134 to 135 (AE), and Arg152 contribute to the S-adenosyl-L-methionine site.

It belongs to the methyltransferase superfamily. RNA methyltransferase RsmG family.

Its subcellular location is the cytoplasm. Specifically methylates the N7 position of guanine in position 518 of 16S rRNA. This chain is Ribosomal RNA small subunit methyltransferase G, found in Corynebacterium diphtheriae (strain ATCC 700971 / NCTC 13129 / Biotype gravis).